The chain runs to 224 residues: ATP-dependent dethiobiotin synthetase BioD (224 aa).

G12–F17 contributes to the ATP binding site. T16 is a Mg(2+) binding site. Residue K37 is part of the active site. Residue T41 coordinates substrate. E107 contributes to the Mg(2+) binding site. Residues E107 to G110, G167 to S168, P197 to G199, and E204 each bind ATP.

It belongs to the dethiobiotin synthetase family. As to quaternary structure, homodimer. The cofactor is Mg(2+).

It localises to the cytoplasm. It catalyses the reaction (7R,8S)-7,8-diammoniononanoate + CO2 + ATP = (4R,5S)-dethiobiotin + ADP + phosphate + 3 H(+). The protein operates within cofactor biosynthesis; biotin biosynthesis; biotin from 7,8-diaminononanoate: step 1/2. Its function is as follows. Catalyzes a mechanistically unusual reaction, the ATP-dependent insertion of CO2 between the N7 and N8 nitrogen atoms of 7,8-diaminopelargonic acid (DAPA, also called 7,8-diammoniononanoate) to form a ureido ring. The protein is ATP-dependent dethiobiotin synthetase BioD of Corynebacterium glutamicum (strain R).